Consider the following 410-residue polypeptide: Chlorobenzene dioxygenase, ferredoxin reductase component (410 aa).

FAD is bound at residue 4–35; that stretch reads HVAIIGNGVAGFTTAQALRAEGFEGRISLIGN. 145–173 serves as a coordination point for NAD(+); that stretch reads RLVIAGGGLIGCEVATTARKLGLAVTILE.

It belongs to the bacterial ring-hydroxylating dioxygenase ferredoxin reductase family. In terms of assembly, this dioxygenase system consists of four proteins: the two subunits of the oxygenase component (TecA1 and TecA2), a ferredoxin (TecA3) and a ferredoxin reductase (TecA4). The cofactor is FAD.

The catalysed reaction is 2 reduced [2Fe-2S]-[ferredoxin] + NAD(+) + H(+) = 2 oxidized [2Fe-2S]-[ferredoxin] + NADH. Its pathway is aromatic compound metabolism. Part of the chlorobenzene dioxygenase system that catalyzes the dihydroxylation of a range of aromatic compounds, including chlorinated benzenes and toluenes, and dinuclear aromatics such as biphenyl and dibenzo-p-dioxin. This is Chlorobenzene dioxygenase, ferredoxin reductase component from Cupriavidus sp. (strain PS12).